Reading from the N-terminus, the 312-residue chain is Oxidoreductase NAD-binding domain-containing protein 1 (312 aa).

Positions 1 to 17 are cleaved as a signal peptide; it reads MACAAVMIPGLLRCSVG. The FAD-binding FR-type domain maps to 50–186; sequence HMERTASVLR…GGVGINPLLS (137 aa). Residue 178-183 participates in NAD(+) binding; that stretch reads GVGINP.

In Homo sapiens (Human), this protein is Oxidoreductase NAD-binding domain-containing protein 1 (OXNAD1).